The chain runs to 474 residues: Aspartyl/glutamyl-tRNA(Asn/Gln) amidotransferase subunit B (474 aa).

This sequence belongs to the GatB/GatE family. GatB subfamily. As to quaternary structure, heterotrimer of A, B and C subunits.

The enzyme catalyses L-glutamyl-tRNA(Gln) + L-glutamine + ATP + H2O = L-glutaminyl-tRNA(Gln) + L-glutamate + ADP + phosphate + H(+). It catalyses the reaction L-aspartyl-tRNA(Asn) + L-glutamine + ATP + H2O = L-asparaginyl-tRNA(Asn) + L-glutamate + ADP + phosphate + 2 H(+). Functionally, allows the formation of correctly charged Asn-tRNA(Asn) or Gln-tRNA(Gln) through the transamidation of misacylated Asp-tRNA(Asn) or Glu-tRNA(Gln) in organisms which lack either or both of asparaginyl-tRNA or glutaminyl-tRNA synthetases. The reaction takes place in the presence of glutamine and ATP through an activated phospho-Asp-tRNA(Asn) or phospho-Glu-tRNA(Gln). This chain is Aspartyl/glutamyl-tRNA(Asn/Gln) amidotransferase subunit B, found in Wolbachia sp. subsp. Brugia malayi (strain TRS).